The primary structure comprises 190 residues: Recombination protein RecR (190 aa).

The segment at 58-73 (CGQCGALSENELCEIC) adopts a C4-type zinc-finger fold. A Toprim domain is found at 81–167 (NILCIVESPK…TFSKIAQGIP (87 aa)).

This sequence belongs to the RecR family.

Functionally, may play a role in DNA repair. It seems to be involved in an RecBC-independent recombinational process of DNA repair. It may act with RecF and RecO. This chain is Recombination protein RecR, found in Campylobacter jejuni subsp. jejuni serotype O:6 (strain 81116 / NCTC 11828).